The following is a 434-amino-acid chain: Eukaryotic translation initiation factor 3 subunit E-2 (434 aa).

A PCI domain is found at 219 to 392; it reads FFNHPKGRDL…GHVVMGTQPL (174 aa).

The protein belongs to the eIF-3 subunit E family. In terms of assembly, component of the eukaryotic translation initiation factor 3 (eIF-3) complex. The eIF-3 complex interacts with pix. Interacts with mxt.

It localises to the cytoplasm. Functionally, component of the eukaryotic translation initiation factor 3 (eIF-3) complex, which is involved in protein synthesis of a specialized repertoire of mRNAs and, together with other initiation factors, stimulates binding of mRNA and methionyl-tRNAi to the 40S ribosome. The eIF-3 complex specifically targets and initiates translation of a subset of mRNAs involved in cell proliferation. The chain is Eukaryotic translation initiation factor 3 subunit E-2 (eIF3-S6-2) from Drosophila willistoni (Fruit fly).